A 393-amino-acid polypeptide reads, in one-letter code: S-adenosylmethionine synthase 2 (393 aa).

E9 is a Mg(2+) binding site. H15 contacts ATP. Residue E43 coordinates K(+). Positions 56 and 99 each coordinate L-methionine. ATP-binding positions include 167-169 (DGK), 235-238 (SGRF), D246, 252-253 (RK), A269, K273, and K277. Position 246 (D246) interacts with L-methionine. An L-methionine-binding site is contributed by K277.

This sequence belongs to the AdoMet synthase family. In terms of assembly, homotetramer. The cofactor is Mn(2+). Mg(2+) is required as a cofactor. Requires Co(2+) as cofactor. K(+) serves as cofactor.

Its subcellular location is the cytoplasm. The enzyme catalyses L-methionine + ATP + H2O = S-adenosyl-L-methionine + phosphate + diphosphate. The protein operates within amino-acid biosynthesis; S-adenosyl-L-methionine biosynthesis; S-adenosyl-L-methionine from L-methionine: step 1/1. In terms of biological role, catalyzes the formation of S-adenosylmethionine from methionine and ATP. The reaction comprises two steps that are both catalyzed by the same enzyme: formation of S-adenosylmethionine (AdoMet) and triphosphate, and subsequent hydrolysis of the triphosphate. The protein is S-adenosylmethionine synthase 2 (METK2) of Populus trichocarpa (Western balsam poplar).